The following is a 162-amino-acid chain: Functional amyloid chaperone FapA (162 aa).

Positions 1–28 are cleaved as a signal peptide; the sequence is MSGSSLRIVVPALLVIVGSVPVSLPAHA.

Belongs to the FapA family. In terms of assembly, monomer in solution. Interacts with FapC but not FapB in vitro.

It is found in the periplasm. Functionally, an intrinsically disordered chaperone for fibril amyloid FapC that guards against fibrillation within the periplasm. Upon overexpression of the endogenous six-gene locus (fapA-fapF), cells form large clumps during liquid growth, make large amounts of biofilm and produce amyloid fibrils. The chain is Functional amyloid chaperone FapA from Pseudomonas aeruginosa (strain ATCC 15692 / DSM 22644 / CIP 104116 / JCM 14847 / LMG 12228 / 1C / PRS 101 / PAO1).